The chain runs to 689 residues: MQNIDLISEQEAKKLLKELADKIAMYNHAYYIEDNPLVSDSEYDQLFNINLKLENTFPHLVLSNSPSKKVGANITNKFAKVIHQAPMLSLSNAFDEDDLRDFLERIKNFLRINEFTPIFCEPKIDGVSFSAIYKNGLFITGATRGDGYVGEDITMNIKTIKNFPHKIDNAPEFLEVRGEIYIEKQDFLNLNKEQEAQNRGKFANPRNAAAGSIRQLDVAITAQRPLKYFIYSGGVTEQNLASTQEQLLTKLKALSFSVNEISKLASSEEEIFAFYEYLKTNRHNLPYEIDGVVYKLNNFAMQNRMGFIARSPRFAIAHKFPAIIGQTKLLSITVQVGRTGMLTPVAELDPIEIGGVVVSRATLHNFQDIARKDVRIKDYVFLQRAGDVIPQITGVDISKRSNDTVKFDTPVFCPSCNSKLRYVSEDIIIRCDNGLNCPAQNYERICHFVSKNAMDIEGLGRKQVAFLIDKRLISNPLDIFFLKEKNETNLIRLENMDGWGKKSVANLFKNIEKSQKISLQRFIYALGIRHIGEQNAKLLAREFGSYNNFIAQMELLSKNDSDIYQKLNDLEGIGDKILVDIVDFFYVKENTQLIKRLGSVLNIEDYQETREQNILTGKIVVFTGSLSTISRVEAKEIAEKLGAKVTASVSLNTDLVIAGVNGGSKLKKAKELNIKIIDEVEWLAFIKNA.

NAD(+) contacts are provided by residues 40-44 (DSEYD), 89-90 (SL), and glutamate 121. Lysine 123 functions as the N6-AMP-lysine intermediate in the catalytic mechanism. Arginine 144, glutamate 179, lysine 295, and lysine 319 together coordinate NAD(+). Positions 413, 416, 431, and 437 each coordinate Zn(2+). Positions 610-689 (REQNILTGKI…VEWLAFIKNA (80 aa)) constitute a BRCT domain.

Belongs to the NAD-dependent DNA ligase family. LigA subfamily. Requires Mg(2+) as cofactor. It depends on Mn(2+) as a cofactor.

The enzyme catalyses NAD(+) + (deoxyribonucleotide)n-3'-hydroxyl + 5'-phospho-(deoxyribonucleotide)m = (deoxyribonucleotide)n+m + AMP + beta-nicotinamide D-nucleotide.. DNA ligase that catalyzes the formation of phosphodiester linkages between 5'-phosphoryl and 3'-hydroxyl groups in double-stranded DNA using NAD as a coenzyme and as the energy source for the reaction. It is essential for DNA replication and repair of damaged DNA. The sequence is that of DNA ligase from Rickettsia prowazekii (strain Madrid E).